The primary structure comprises 193 residues: Proteasome subunit beta 1 (193 aa).

Residues 1–4 constitute a propeptide, removed in mature form; by autocatalysis; that stretch reads MPGA. Threonine 5 acts as the Nucleophile in catalysis.

This sequence belongs to the peptidase T1B family. In terms of assembly, the 20S proteasome core is composed of 14 alpha and 14 beta subunits that assemble into four stacked heptameric rings, resulting in a barrel-shaped structure. The two inner rings, each composed of seven catalytic beta subunits, are sandwiched by two outer rings, each composed of seven alpha subunits. The catalytic chamber with the active sites is on the inside of the barrel. Has a gated structure, the ends of the cylinder being occluded by the N-termini of the alpha-subunits. Is capped at one or both ends by the proteasome regulatory ATPase, PAN.

It localises to the cytoplasm. It catalyses the reaction Cleavage of peptide bonds with very broad specificity.. The formation of the proteasomal ATPase PAN-20S proteasome complex, via the docking of the C-termini of PAN into the intersubunit pockets in the alpha-rings, triggers opening of the gate for substrate entry. Interconversion between the open-gate and close-gate conformations leads to a dynamic regulation of the 20S proteasome proteolysis activity. Component of the proteasome core, a large protease complex with broad specificity involved in protein degradation. The protein is Proteasome subunit beta 1 of Cenarchaeum symbiosum (strain A).